The sequence spans 138 residues: Large ribosomal subunit protein bL19 (138 aa).

Belongs to the bacterial ribosomal protein bL19 family.

In terms of biological role, this protein is located at the 30S-50S ribosomal subunit interface and may play a role in the structure and function of the aminoacyl-tRNA binding site. In Rickettsia prowazekii (strain Madrid E), this protein is Large ribosomal subunit protein bL19 (rplS).